Consider the following 193-residue polypeptide: Lipopolysaccharide core heptose(II)-phosphate phosphatase (193 aa).

A signal peptide spans 1 to 25 (MKLKKHVAVLLISFLCLIGLVTQHA).

It belongs to the phosphoglycerate mutase family. Ais subfamily.

The protein resides in the periplasm. It functions in the pathway bacterial outer membrane biogenesis; lipopolysaccharide metabolism. Catalyzes the dephosphorylation of heptose(II) of the outer membrane lipopolysaccharide core. This Escherichia fergusonii (strain ATCC 35469 / DSM 13698 / CCUG 18766 / IAM 14443 / JCM 21226 / LMG 7866 / NBRC 102419 / NCTC 12128 / CDC 0568-73) protein is Lipopolysaccharide core heptose(II)-phosphate phosphatase.